Here is a 601-residue protein sequence, read N- to C-terminus: Threonine dehydratase (601 aa).

Residues methionine 1–arginine 51 constitute a chloroplast transit peptide. 2 consecutive ACT-like domains span residues alanine 427–asparagine 499 and isoleucine 521–leucine 592.

The protein belongs to the serine/threonine dehydratase family. It depends on pyridoxal 5'-phosphate as a cofactor.

The protein localises to the plastid. Its subcellular location is the chloroplast. The enzyme catalyses L-threonine = 2-oxobutanoate + NH4(+). It participates in amino-acid biosynthesis; L-isoleucine biosynthesis; 2-oxobutanoate from L-threonine: step 1/1. Catalyzes the conversion of threonine to alpha-keto butyrate in isoleucine (Ile) biosynthesis. Required for JA-Ile biosynthesis, a signaling molecule involved in defense and resistance to the herbivore Manduca sexta caterpillars. In Nicotiana attenuata (Coyote tobacco), this protein is Threonine dehydratase.